The chain runs to 285 residues: MAAEEVTLSSHIQHHLTNAKMCSTDAGLAFNKACADSGFWTWHVDTLAWSIGLGLIFLWIFRSAAKKSTLGVPGKFQCFIEIIVEFVGDNVRDTFHGKSKLIAPLALTIFVWVFLMNLMDLIPVDFLPSFAGFVGETAFGMDSHDVYMKIVPTTDINMTSALALGVFILMVGFAIKIKGIGGFIKELTLHPFSSNNVFVQILLIPFNLLLELIALVSKPFSLALRLFGNLYAGELIFILIGAIGFMQLPLHFVWAVFHILVITLQAFLFMMLTIVYLSMASSDNH.

6 helical membrane passes run 41–61 (TWHV…LWIF), 102–122 (IAPL…MDLI), 164–184 (LGVF…GGFI), 197–217 (VFVQ…ALVS), 226–246 (LFGN…IGFM), and 252–272 (FVWA…FMML).

Belongs to the ATPase A chain family. F-type ATPases have 2 components, CF(1) - the catalytic core - and CF(0) - the membrane proton channel. CF(1) has five subunits: alpha(3), beta(3), gamma(1), delta(1), epsilon(1). CF(0) has three main subunits: a(1), b(2) and c(9-12). The alpha and beta chains form an alternating ring which encloses part of the gamma chain. CF(1) is attached to CF(0) by a central stalk formed by the gamma and epsilon chains, while a peripheral stalk is formed by the delta and b chains.

Its subcellular location is the cell inner membrane. Key component of the proton channel; it plays a direct role in the translocation of protons across the membrane. This chain is ATP synthase subunit a, found in Pseudoalteromonas translucida (strain TAC 125).